A 473-amino-acid chain; its full sequence is Anthocyanidin 5,3-O-glucosyltransferase (473 aa).

It belongs to the UDP-glycosyltransferase family.

The protein operates within pigment biosynthesis; anthocyanin biosynthesis. Functionally, sequentially catalyzes two glycosylation steps at the 5-OH and 3-OH positions of anthocyanidin. Unglycosylated anthocyanidin or anthocyanidin 5-O-glucoside, but not anthocyanidin 3-O-glucoside, can be used as glucosyl acceptor. The chain is Anthocyanidin 5,3-O-glucosyltransferase (RhGT1) from Rosa hybrid cultivar.